We begin with the raw amino-acid sequence, 113 residues long: Dolichyl-diphosphooligosaccharide--protein glycosyltransferase subunit DAD1 (113 aa).

Position 2 is an N-acetylserine (serine 2). Residues 2 to 30 (SASVVSVISRFLEEYLSSTPQRLKLLDAY) are Cytoplasmic-facing. A helical transmembrane segment spans residues 31-51 (LLYILLTGALQFGYCLLVGTF). Residue proline 52 is a topological domain, lumenal. Residues 53 to 73 (FNSFLSGFISCVGSFILAVCL) form a helical membrane-spanning segment. At 74–92 (RIQINPQNKADFQGISPER) the chain is on the cytoplasmic side. Residues 93 to 113 (AFADFLFASTILHLVVMNFVG) form a helical membrane-spanning segment.

Belongs to the DAD/OST2 family. In terms of assembly, component of the oligosaccharyltransferase (OST) complex. OST exists in two different complex forms which contain common core subunits RPN1, RPN2, OST48, OST4, DAD1 and TMEM258, either STT3A or STT3B as catalytic subunits, and form-specific accessory subunits. STT3A complex assembly occurs through the formation of 3 subcomplexes. Subcomplex 1 contains RPN1 and TMEM258, subcomplex 2 contains the STT3A-specific subunits STT3A, DC2/OSTC, and KCP2 as well as the core subunit OST4, and subcomplex 3 contains RPN2, DAD1, and OST48. The STT3A complex can form stable complexes with the Sec61 complex or with both the Sec61 and TRAP complexes.

The protein localises to the endoplasmic reticulum membrane. The protein operates within protein modification; protein glycosylation. Subunit of the oligosaccharyl transferase (OST) complex that catalyzes the initial transfer of a defined glycan (Glc(3)Man(9)GlcNAc(2) in eukaryotes) from the lipid carrier dolichol-pyrophosphate to an asparagine residue within an Asn-X-Ser/Thr consensus motif in nascent polypeptide chains, the first step in protein N-glycosylation. N-glycosylation occurs cotranslationally and the complex associates with the Sec61 complex at the channel-forming translocon complex that mediates protein translocation across the endoplasmic reticulum (ER). All subunits are required for a maximal enzyme activity. In Mus musculus (Mouse), this protein is Dolichyl-diphosphooligosaccharide--protein glycosyltransferase subunit DAD1.